A 285-amino-acid chain; its full sequence is Hsp90 co-chaperone Cdc37-like 1 (285 aa).

The interval 34–54 (LHNSESMDQEQAMAQAELSEL) is disordered. Residues 35–73 (HNSESMDQEQAMAQAELSELQRSEEEWRRKEAALSQGEN) are a coiled coil.

The protein belongs to the CDC37 family. Forms complexes with Hsp70 and Hsp90.

Its subcellular location is the cytoplasm. Co-chaperone that binds to numerous proteins and promotes their interaction with Hsp70 and Hsp90. The sequence is that of Hsp90 co-chaperone Cdc37-like 1 (cdc37l1) from Xenopus tropicalis (Western clawed frog).